The primary structure comprises 185 residues: Photosystem I assembly protein Ycf4 (185 aa).

2 helical membrane-spanning segments follow: residues 24–44 (YIIG…SISS) and 58–78 (ALLF…ANLL).

The protein belongs to the Ycf4 family.

It is found in the cellular thylakoid membrane. Its function is as follows. Seems to be required for the assembly of the photosystem I complex. In Prochlorococcus marinus (strain MIT 9215), this protein is Photosystem I assembly protein Ycf4.